Reading from the N-terminus, the 261-residue chain is uncharacterized protein (261 aa).

The ABC transporter domain maps to 1–236 (MEIKEITIIG…SRKINEVDNW (236 aa)). 36 to 43 (GPTGSGKS) contributes to the ATP binding site.

Belongs to the ABC transporter superfamily.

This is an uncharacterized protein from Methanocaldococcus jannaschii (strain ATCC 43067 / DSM 2661 / JAL-1 / JCM 10045 / NBRC 100440) (Methanococcus jannaschii).